A 367-amino-acid polypeptide reads, in one-letter code: MNIHSRDVNETPDRSDAEQALAVLRRWAGEASETEVAQLDPAIARLLPGQELQNYPDLKRQYPDDFDANESYRATLPDLQNGPSSLIRGAKEQIQHVGISNFRLPIRFHTRDNGDLTLETSVTGTVSLDAEKKGINMSRIMRSFYKHAEKVFSFDVMEAALEDYLSDLESGDARLQMRFSFPVKVQSLRSGLSGYQYYDVALELVQMAGQRHRIVHLDYVYSSTCPCSLELSEHARQARGQLATPHSQRSVARISVQMEQDGGCLWFEDLIDHCRRAVPTETQVMVKREDEQAFAELNAANPIFVEDAARLFCEALQSDARVGDFRVVASHQESLHSHDAVSVLTQGTMFAAPSLDPQLFSTLIHRG.

It belongs to the GTP cyclohydrolase IV family.

It carries out the reaction GTP + H2O = 7,8-dihydroneopterin 3'-triphosphate + formate + H(+). The protein operates within cofactor biosynthesis; 7,8-dihydroneopterin triphosphate biosynthesis; 7,8-dihydroneopterin triphosphate from GTP: step 1/1. In terms of biological role, converts GTP to 7,8-dihydroneopterin triphosphate. The protein is GTP cyclohydrolase FolE2 of Ruegeria sp. (strain TM1040) (Silicibacter sp.).